Here is a 933-residue protein sequence, read N- to C-terminus: Isoleucine--tRNA ligase (933 aa).

A 'HIGH' region motif is present at residues P57 to H67. Residue E554 coordinates L-isoleucyl-5'-AMP. The short motif at K595–S599 is the 'KMSKS' region element. K598 is an ATP binding site.

Belongs to the class-I aminoacyl-tRNA synthetase family. IleS type 1 subfamily. Monomer.

Its subcellular location is the cytoplasm. It catalyses the reaction tRNA(Ile) + L-isoleucine + ATP = L-isoleucyl-tRNA(Ile) + AMP + diphosphate. Functionally, catalyzes the attachment of isoleucine to tRNA(Ile). As IleRS can inadvertently accommodate and process structurally similar amino acids such as valine, to avoid such errors it has two additional distinct tRNA(Ile)-dependent editing activities. One activity is designated as 'pretransfer' editing and involves the hydrolysis of activated Val-AMP. The other activity is designated 'posttransfer' editing and involves deacylation of mischarged Val-tRNA(Ile). This is Isoleucine--tRNA ligase from Streptococcus pyogenes serotype M28 (strain MGAS6180).